The sequence spans 309 residues: Syndecan-1 (309 aa).

Residues methionine 1–proline 22 form the signal peptide. The Extracellular segment spans residues glutamine 23–glycine 253. 2 disordered regions span residues asparagine 28–leucine 57 and threonine 145–serine 185. The segment covering glutamate 32–aspartate 42 has biased composition (acidic residues). An O-linked (Xyl...) (chondroitin sulfate) serine glycan is attached at serine 37. Asparagine 43 carries N-linked (GlcNAc...) asparagine glycosylation. Residues serine 45 and serine 47 are each glycosylated (O-linked (Xyl...) (heparan sulfate) serine). Over residues glycine 173–glycine 183 the composition is skewed to low complexity. O-linked (Xyl...) (chondroitin sulfate) serine glycans are attached at residues serine 205 and serine 215. The chain crosses the membrane as a helical span at residues glycine 254–leucine 274. The Cytoplasmic segment spans residues tyrosine 275–alanine 309. Residues glycine 283–alanine 309 form a disordered region. Position 284 is a phosphoserine (serine 284).

It belongs to the syndecan proteoglycan family. Interacts with CDCP1. Interacts (via C-terminus) with TIAM1 (via PDZ domain). Interacts with MDK. Shedding is enhanced by a number of factors such as heparanase, thrombin or EGF. Also by stress and wound healing. PMA-mediated shedding is inhibited by TIMP3.

It is found in the membrane. The protein resides in the secreted. It localises to the extracellular exosome. In terms of biological role, cell surface proteoglycan that contains both heparan sulfate and chondroitin sulfate and that links the cytoskeleton to the interstitial matrix. Regulates exosome biogenesis in concert with SDCBP and PDCD6IP. Able to induce its own expression in dental mesenchymal cells and also in the neighboring dental epithelial cells via an MSX1-mediated pathway. This is Syndecan-1 from Mesocricetus auratus (Golden hamster).